A 200-amino-acid polypeptide reads, in one-letter code: Adenylyl-sulfate kinase (200 aa).

36 to 43 is a binding site for ATP; the sequence is GLSGSGKS. Serine 110 acts as the Phosphoserine intermediate in catalysis.

This sequence belongs to the APS kinase family.

The catalysed reaction is adenosine 5'-phosphosulfate + ATP = 3'-phosphoadenylyl sulfate + ADP + H(+). It functions in the pathway sulfur metabolism; hydrogen sulfide biosynthesis; sulfite from sulfate: step 2/3. Catalyzes the synthesis of activated sulfate. This chain is Adenylyl-sulfate kinase, found in Clostridium acetobutylicum (strain ATCC 824 / DSM 792 / JCM 1419 / IAM 19013 / LMG 5710 / NBRC 13948 / NRRL B-527 / VKM B-1787 / 2291 / W).